The sequence spans 521 residues: Ankyrin repeat domain-containing protein 34B (521 aa).

ANK repeat units lie at residues 9-38 (TESNSLIKAVYQSRLRLTRLLLEGGAYINE), 42-79 (RGETPLMIACKTKHVDHQSVSKVKMIKYLLENNADPNI), 83-113 (FGKTALMHACLENAGAEVVSLLLESGADPSL), and 117-146 (TGFSALVYAVNSEDKETLRILLNACKAKGK). A disordered region spans residues 161–188 (QTTRQYLNVPPSPGIEGNNSPSPCTSPS). A compositionally biased stretch (polar residues) spans 177–188 (GNNSPSPCTSPS).

Belongs to the ANKRD34 family.

Its subcellular location is the cytoplasm. The protein resides in the nucleus. This is Ankyrin repeat domain-containing protein 34B (ankrd34b) from Xenopus laevis (African clawed frog).